Here is a 1004-residue protein sequence, read N- to C-terminus: NACHT, LRR and PYD domains-containing protein 9C (1004 aa).

Residues 1 to 92 (MVDSSSYGLL…TMAQIERRDK (92 aa)) enclose the Pyrin domain. Positions 143-465 (ATAVVLGTRG…KQDKDTYHPV (323 aa)) constitute an NACHT domain. Position 149–156 (149–156 (GTRGKGKT)) interacts with ATP. 5 LRR repeats span residues 750–770 (KVKH…MFLC), 779–800 (VLES…HLYE), 807–828 (HLSL…LLCE), 836–857 (TLKE…EISA), and 864–884 (NLKT…KRLC).

The protein belongs to the NLRP family. As to expression, oocyte specific.

It is found in the cytoplasm. Functionally, may be involved in inflammation. The polypeptide is NACHT, LRR and PYD domains-containing protein 9C (Nlrp9c) (Mus musculus (Mouse)).